The chain runs to 314 residues: uncharacterized protein (314 aa).

The span at glutamate 68 to proline 91 shows a compositional bias: basic and acidic residues. Disordered regions lie at residues glutamate 68 to asparagine 97 and methionine 141 to serine 164. Over residues glutamine 144–arginine 157 the composition is skewed to polar residues.

It localises to the mitochondrion. This is an uncharacterized protein from Schizosaccharomyces pombe (strain 972 / ATCC 24843) (Fission yeast).